Consider the following 260-residue polypeptide: MNPAPKKPSLLFSSLLFSSAAQAAGEDHGRGPYVQADLAYAYEHITHDYPEQTDPSKGKISTVSDYFRNIRTHSIHPRVSVGYDFGGWRIAADYARYRKWNNNKYSVSIKELLRNKVNGNRTDRKTENQENGTFHAVSSLGLSAVYDFKLNDKFKPYIGARVAYGHVRHSIDSTKKTTEVTTILHGPGTTPTVYPGKNTQDAHRESDSIRRVGLGAVAGVGIDITPNLTLDAGYRYHYWGRLENTRFKTHEASLGVRYRF.

The signal sequence occupies residues 1–23 (MNPAPKKPSLLFSSLLFSSAAQA).

This sequence belongs to the opacity porin family.

The protein resides in the cell outer membrane. Its function is as follows. Implicated in a number of adherence functions. OPA proteins are implicated in pathogenesis and are subject to phase variation. This chain is Opacity protein opA58 (opaJ), found in Neisseria gonorrhoeae.